The primary structure comprises 640 residues: Spindle assembly abnormal protein 6 homolog (640 aa).

The PISA domain occupies 40-92 (VHKKDLAVRLTDDADPFFLYNLVISEEDFQSLKSQQGLLVDFSAFPQKFIDLL). A coiled-coil region spans residues 154–475 (LARCLKCLKE…KQLLKTNENV (322 aa)).

In terms of assembly, nine homodimers form a cartwheel structure with an internal diameter of 23 nM and radial spokes connecting to the microtubule triplets.

It localises to the cytoplasm. Its subcellular location is the cytoskeleton. The protein localises to the microtubule organizing center. It is found in the centrosome. Its function is as follows. Central scaffolding component of the centrioles ensuring their 9-fold symmetry. Required for centrosome biogenesis and duplication: required both for mother-centriole-dependent centriole duplication and deuterosome-dependent centriole amplification in multiciliated cells. The protein is Spindle assembly abnormal protein 6 homolog (SASS6) of Gallus gallus (Chicken).